The primary structure comprises 89 residues: Small ribosomal subunit protein uS19 (89 aa).

The protein belongs to the universal ribosomal protein uS19 family.

In terms of biological role, protein S19 forms a complex with S13 that binds strongly to the 16S ribosomal RNA. The protein is Small ribosomal subunit protein uS19 of Bacteroides fragilis (strain YCH46).